A 608-amino-acid chain; its full sequence is ABC transporter ATP-binding protein RamB (608 aa).

Helical transmembrane passes span 25–45, 66–86, 141–161, 166–186, and 253–273; these read GVLV…FLVG, LWLG…RGVF, GLVL…LGLL, ALLV…LVTL, and AALG…VEWL. The region spanning 30–296 is the ABC transmembrane type-1 domain; the sequence is LALWSLAESG…FTYLVQSLLP (267 aa). Residues 321–362 are disordered; that stretch reads GPEPEPEPEPEPEPEPELGSGLEPEPEPASEPESGPSTASAS. Residues 324-336 show a composition bias toward acidic residues; it reads PEPEPEPEPEPEP. Over residues 351 to 362 the composition is skewed to low complexity; it reads EPESGPSTASAS. In terms of domain architecture, ABC transporter spans 376-605; it reads VELRSVTLSY…SPLYRDLTGH (230 aa). 410-417 serves as a coordination point for ATP; it reads GPSGIGKS.

This sequence belongs to the ABC transporter superfamily.

The protein localises to the cell membrane. Functionally, probably involved in exporting SapB from the cell. Expression of the ram locus (ramA, ramB and ramR) induces rapid aerial mycelium formation in S.lividans. The sequence is that of ABC transporter ATP-binding protein RamB from Streptomyces coelicolor (strain ATCC BAA-471 / A3(2) / M145).